We begin with the raw amino-acid sequence, 486 residues long: V-type proton ATPase subunit B1 (486 aa).

Gly-2 carries the N-acetylglycine modification.

Belongs to the ATPase alpha/beta chains family. V-ATPase is a heteromultimeric enzyme composed of a peripheral catalytic V1 complex (components A to H) attached to an integral membrane V0 proton pore complex (components: a, c, c'', d and e).

The protein resides in the vacuole membrane. Its function is as follows. Non-catalytic subunit of the peripheral V1 complex of vacuolar ATPase. V-ATPase is responsible for acidifying a variety of intracellular compartments in eukaryotic cells. The chain is V-type proton ATPase subunit B1 (VHA-B1) from Arabidopsis thaliana (Mouse-ear cress).